Here is a 1033-residue protein sequence, read N- to C-terminus: Isoleucine--tRNA ligase 2 (1033 aa).

Residues 47-57 carry the 'HIGH' region motif; sequence PTANGLPHVGH. Residues 590 to 594 carry the 'KMSKS' region motif; sequence KMSKS. ATP is bound at residue lysine 593.

The protein belongs to the class-I aminoacyl-tRNA synthetase family. IleS type 2 subfamily. In terms of assembly, monomer. The cofactor is Zn(2+).

Its subcellular location is the cytoplasm. It catalyses the reaction tRNA(Ile) + L-isoleucine + ATP = L-isoleucyl-tRNA(Ile) + AMP + diphosphate. Catalyzes the attachment of isoleucine to tRNA(Ile). As IleRS can inadvertently accommodate and process structurally similar amino acids such as valine, to avoid such errors it has two additional distinct tRNA(Ile)-dependent editing activities. One activity is designated as 'pretransfer' editing and involves the hydrolysis of activated Val-AMP. The other activity is designated 'posttransfer' editing and involves deacylation of mischarged Val-tRNA(Ile). The chain is Isoleucine--tRNA ligase 2 from Bacillus anthracis.